The sequence spans 202 residues: Recombination protein RecR (202 aa).

The segment at 56 to 71 adopts a C4-type zinc-finger fold; sequence CVVCGTVSDKEHCRIC. The Toprim domain occupies 79–179; the sequence is TVICVVEEPK…TVSRLASGLP (101 aa).

This sequence belongs to the RecR family.

In terms of biological role, may play a role in DNA repair. It seems to be involved in an RecBC-independent recombinational process of DNA repair. It may act with RecF and RecO. The protein is Recombination protein RecR of Rhodococcus jostii (strain RHA1).